The following is a 132-amino-acid chain: Sec-independent protein translocase protein TatB (132 aa).

Residues 2-22 traverse the membrane as a helical segment; the sequence is FDGIGFMELLLIGILGLVVLG. A disordered region spans residues 68–132; the sequence is ENQGLKDLSP…VSANPDKSNR (65 aa). A compositionally biased stretch (low complexity) spans 102–122; the sequence is TPSASSSAPSESTPSEAPTAE.

Belongs to the TatB family. The Tat system comprises two distinct complexes: a TatABC complex, containing multiple copies of TatA, TatB and TatC subunits, and a separate TatA complex, containing only TatA subunits. Substrates initially bind to the TatABC complex, which probably triggers association of the separate TatA complex to form the active translocon.

It localises to the cell inner membrane. In terms of biological role, part of the twin-arginine translocation (Tat) system that transports large folded proteins containing a characteristic twin-arginine motif in their signal peptide across membranes. Together with TatC, TatB is part of a receptor directly interacting with Tat signal peptides. TatB may form an oligomeric binding site that transiently accommodates folded Tat precursor proteins before their translocation. This Shewanella woodyi (strain ATCC 51908 / MS32) protein is Sec-independent protein translocase protein TatB.